The sequence spans 266 residues: Hydroxyethylthiazole kinase (266 aa).

Residue M43 participates in substrate binding. R119 and T166 together coordinate ATP. G193 is a binding site for substrate.

Belongs to the Thz kinase family. Requires Mg(2+) as cofactor.

The enzyme catalyses 5-(2-hydroxyethyl)-4-methylthiazole + ATP = 4-methyl-5-(2-phosphooxyethyl)-thiazole + ADP + H(+). The protein operates within cofactor biosynthesis; thiamine diphosphate biosynthesis; 4-methyl-5-(2-phosphoethyl)-thiazole from 5-(2-hydroxyethyl)-4-methylthiazole: step 1/1. Its function is as follows. Catalyzes the phosphorylation of the hydroxyl group of 4-methyl-5-beta-hydroxyethylthiazole (THZ). The polypeptide is Hydroxyethylthiazole kinase (Methanococcus maripaludis (strain C6 / ATCC BAA-1332)).